Consider the following 159-residue polypeptide: Phosphopantetheine adenylyltransferase (159 aa).

Ser-8 is a binding site for substrate. Residues 8–9 and His-16 contribute to the ATP site; that span reads SF. Residues Lys-40, Val-72, and Arg-86 each coordinate substrate. ATP contacts are provided by residues 87-89, Glu-97, and 122-128; these read GVR and YAALRSS.

The protein belongs to the bacterial CoaD family. In terms of assembly, homohexamer. The cofactor is Mg(2+).

The protein localises to the cytoplasm. It carries out the reaction (R)-4'-phosphopantetheine + ATP + H(+) = 3'-dephospho-CoA + diphosphate. The protein operates within cofactor biosynthesis; coenzyme A biosynthesis; CoA from (R)-pantothenate: step 4/5. Reversibly transfers an adenylyl group from ATP to 4'-phosphopantetheine, yielding dephospho-CoA (dPCoA) and pyrophosphate. This is Phosphopantetheine adenylyltransferase from Treponema pallidum (strain Nichols).